A 505-amino-acid chain; its full sequence is RNA-binding region-containing protein 3 (505 aa).

In terms of domain architecture, RRM 1 spans 15 to 90 (KTLIIRHLPR…RTLVVEFAKD (76 aa)). Disordered regions lie at residues 96–123 (ILKD…QPSV), 193–236 (PPMF…EEER), 354–374 (AQVP…SEFI), and 486–505 (ARSA…GRKH). A compositionally biased stretch (pro residues) spans 193–214 (PPMFEMPSGPLPPPFPPENPPL). 2 stretches are compositionally biased toward acidic residues: residues 221 to 235 (GSEE…DEEE) and 361 to 370 (EEQEEDEDIP). The 84-residue stretch at 405-488 (CRLYVKNVAK…KPLVVQFARS (84 aa)) folds into the RRM 2 domain. Over residues 491–505 (PKQESADPKKGGRKH) the composition is skewed to basic and acidic residues.

As to quaternary structure, component of the U11/U12 snRNPs that are part of the U12-type spliceosome.

It localises to the nucleus. In terms of biological role, participates in pre-mRNA U12-dependent splicing, performed by the minor spliceosome which removes U12-type introns. U12-type introns comprise less than 1% of all non-coding sequences. This Danio rerio (Zebrafish) protein is RNA-binding region-containing protein 3.